The sequence spans 626 residues: Phosphomethylpyrimidine synthase (626 aa).

Residues 1-22 (MTKQEKAINLSESAQVDQQSVQ) are disordered. The segment covering 10-22 (LSESAQVDQQSVQ) has biased composition (polar residues). Substrate-binding positions include N232, M261, Y290, H326, 346-348 (SRG), 387-390 (DGLR), and E426. H430 contributes to the Zn(2+) binding site. Y453 contributes to the substrate binding site. H494 provides a ligand contact to Zn(2+). Residues C574, C577, and C582 each contribute to the [4Fe-4S] cluster site.

This sequence belongs to the ThiC family. As to quaternary structure, homodimer. [4Fe-4S] cluster is required as a cofactor.

It catalyses the reaction 5-amino-1-(5-phospho-beta-D-ribosyl)imidazole + S-adenosyl-L-methionine = 4-amino-2-methyl-5-(phosphooxymethyl)pyrimidine + CO + 5'-deoxyadenosine + formate + L-methionine + 3 H(+). The protein operates within cofactor biosynthesis; thiamine diphosphate biosynthesis. In terms of biological role, catalyzes the synthesis of the hydroxymethylpyrimidine phosphate (HMP-P) moiety of thiamine from aminoimidazole ribotide (AIR) in a radical S-adenosyl-L-methionine (SAM)-dependent reaction. This Pseudomonas putida (strain ATCC 47054 / DSM 6125 / CFBP 8728 / NCIMB 11950 / KT2440) protein is Phosphomethylpyrimidine synthase.